We begin with the raw amino-acid sequence, 422 residues long: 5-methylthioadenosine/S-adenosylhomocysteine deaminase 1 (422 aa).

Zn(2+) is bound by residues His56 and His58. Substrate is bound by residues Glu85 and His174. Position 201 (His201) interacts with Zn(2+). Substrate is bound by residues Glu204 and Asp290. Asp290 contributes to the Zn(2+) binding site.

The protein belongs to the metallo-dependent hydrolases superfamily. MTA/SAH deaminase family. It depends on Zn(2+) as a cofactor.

It carries out the reaction S-adenosyl-L-homocysteine + H2O + H(+) = S-inosyl-L-homocysteine + NH4(+). The enzyme catalyses S-methyl-5'-thioadenosine + H2O + H(+) = S-methyl-5'-thioinosine + NH4(+). In terms of biological role, catalyzes the deamination of 5-methylthioadenosine and S-adenosyl-L-homocysteine into 5-methylthioinosine and S-inosyl-L-homocysteine, respectively. Is also able to deaminate adenosine. This Archaeoglobus fulgidus (strain ATCC 49558 / DSM 4304 / JCM 9628 / NBRC 100126 / VC-16) protein is 5-methylthioadenosine/S-adenosylhomocysteine deaminase 1.